The sequence spans 76 residues: Kappa-actitoxin-Avd4g (76 aa).

Positions 1–19 are cleaved as a signal peptide; that stretch reads MNKALFLCLVVLCAAVVFA. Positions 20–31 are excised as a propeptide; it reads AEDLQKAKHAPF. 3 cysteine pairs are disulfide-bonded: C37-C72, C39-C65, and C55-C73.

It belongs to the sea anemone type 3 (BDS) potassium channel toxin family. Moderately expressed in the ectodermal tissue from the distal and proximal tentacles, body wall, and oral disk.

It is found in the secreted. It localises to the nematocyst. Functionally, blocks Kv3 voltage-gated potassium channels. Reduces blood pressure. The sequence is that of Kappa-actitoxin-Avd4g from Anemonia viridis (Snakelocks anemone).